Consider the following 360-residue polypeptide: Protein Wnt-2 (360 aa).

The signal sequence occupies residues 1–25 (MNAPLCGIWLWLPLLLTWLTPEVSS). 11 disulfide bridges follow: cysteine 76–cysteine 87, cysteine 127–cysteine 135, cysteine 137–cysteine 157, cysteine 206–cysteine 220, cysteine 208–cysteine 215, cysteine 278–cysteine 309, cysteine 294–cysteine 304, cysteine 308–cysteine 348, cysteine 324–cysteine 339, cysteine 326–cysteine 336, and cysteine 331–cysteine 332. A lipid anchor (O-palmitoleoyl serine; by PORCN) is attached at serine 212. Asparagine 295 carries N-linked (GlcNAc...) asparagine glycosylation.

This sequence belongs to the Wnt family. Palmitoleoylation is required for efficient binding to frizzled receptors. Depalmitoleoylation leads to Wnt signaling pathway inhibition.

The protein localises to the secreted. Its subcellular location is the extracellular space. The protein resides in the extracellular matrix. Ligand for members of the frizzled family of seven transmembrane receptors. Functions in the canonical Wnt signaling pathway that results in activation of transcription factors of the TCF/LEF family. Functions as a upstream regulator of FGF10 expression. Plays an important role in embryonic lung development. May contribute to embryonic brain development by regulating the proliferation of dopaminergic precursors and neurons. This chain is Protein Wnt-2 (WNT2), found in Otolemur garnettii (Small-eared galago).